Here is a 290-residue protein sequence, read N- to C-terminus: Bifunctional protein FolD (290 aa).

NADP(+)-binding positions include 164–166 (GRS), Ser-193, and Ile-234.

This sequence belongs to the tetrahydrofolate dehydrogenase/cyclohydrolase family. Homodimer.

The catalysed reaction is (6R)-5,10-methylene-5,6,7,8-tetrahydrofolate + NADP(+) = (6R)-5,10-methenyltetrahydrofolate + NADPH. It catalyses the reaction (6R)-5,10-methenyltetrahydrofolate + H2O = (6R)-10-formyltetrahydrofolate + H(+). The protein operates within one-carbon metabolism; tetrahydrofolate interconversion. Its function is as follows. Catalyzes the oxidation of 5,10-methylenetetrahydrofolate to 5,10-methenyltetrahydrofolate and then the hydrolysis of 5,10-methenyltetrahydrofolate to 10-formyltetrahydrofolate. The sequence is that of Bifunctional protein FolD from Cytophaga hutchinsonii (strain ATCC 33406 / DSM 1761 / CIP 103989 / NBRC 15051 / NCIMB 9469 / D465).